The chain runs to 664 residues: Macoilin (664 aa).

4 helical membrane-spanning segments follow: residues 28 to 48 (TFLYLKFLVVWALVLLADFVL), 75 to 95 (AFSVFFVCVAFTSNIICLLFI), 120 to 140 (VCLPTVSLWILFVYIEAAIRF), and 154 to 174 (FAAHCIGYPVVTLGFGFKSYV). Residues 253 to 265 (REKGKEKDKDAKK) are compositionally biased toward basic and acidic residues. The interval 253-274 (REKGKEKDKDAKKHNLGINNNN) is disordered. Position 305 is a phosphoserine (Ser305). Residues 320–348 (KNYKNASGVVNSSPRSHSATNGSIPSSSS) show a composition bias toward polar residues. Residues 320–367 (KNYKNASGVVNSSPRSHSATNGSIPSSSSKNEKKQKCTSKSPSAHKDL) are disordered. N-linked (GlcNAc...) asparagine glycosylation occurs at Asn324. Residue Ser332 is modified to Phosphoserine. N-linked (GlcNAc...) asparagine glycans are attached at residues Asn340 and Asn452. Residues 630-664 (TSPLSPVSPHYSSKFVETSPSGLDPNASVYQPLKK) are disordered. Residues Ser631 and Ser634 each carry the phosphoserine modification. N-linked (GlcNAc...) asparagine glycosylation occurs at Asn655.

The protein belongs to the macoilin family.

The protein resides in the rough endoplasmic reticulum membrane. It localises to the nucleus membrane. Functionally, plays a role in the regulation of neuronal activity. This is Macoilin (MACO1) from Sus scrofa (Pig).